Here is a 401-residue protein sequence, read N- to C-terminus: Phosphoglycerate kinase (401 aa).

Substrate contacts are provided by residues 20–22 (DFN), Arg-35, 58–61 (HLGR), Arg-117, and Arg-154. ATP contacts are provided by residues Lys-204, Gly-298, Glu-329, and 358–361 (GGDS).

This sequence belongs to the phosphoglycerate kinase family. In terms of assembly, monomer.

The protein localises to the cytoplasm. The catalysed reaction is (2R)-3-phosphoglycerate + ATP = (2R)-3-phospho-glyceroyl phosphate + ADP. Its pathway is carbohydrate degradation; glycolysis; pyruvate from D-glyceraldehyde 3-phosphate: step 2/5. This Bifidobacterium longum (strain DJO10A) protein is Phosphoglycerate kinase.